A 551-amino-acid polypeptide reads, in one-letter code: GMP synthase [glutamine-hydrolyzing] (551 aa).

The Glutamine amidotransferase type-1 domain occupies 40 to 233; it reads KILIVDFGSQ…VRKIAGLTGD (194 aa). Catalysis depends on Cys-117, which acts as the Nucleophile. Residues His-207 and Glu-209 contribute to the active site. Positions 234 to 426 constitute a GMPS ATP-PPase domain; that stretch reads WTMRAFREEE…LGLPEIFVGR (193 aa). Residue 261-267 coordinates ATP; that stretch reads SGGVDSA.

In terms of assembly, homodimer.

The catalysed reaction is XMP + L-glutamine + ATP + H2O = GMP + L-glutamate + AMP + diphosphate + 2 H(+). The protein operates within purine metabolism; GMP biosynthesis; GMP from XMP (L-Gln route): step 1/1. Catalyzes the synthesis of GMP from XMP. The polypeptide is GMP synthase [glutamine-hydrolyzing] (Bradyrhizobium diazoefficiens (strain JCM 10833 / BCRC 13528 / IAM 13628 / NBRC 14792 / USDA 110)).